A 182-amino-acid chain; its full sequence is Isopentenyl-diphosphate Delta-isomerase (182 aa).

Mn(2+) is bound by residues His-25 and His-32. One can recognise a Nudix hydrolase domain in the interval 30-164; the sequence is LLHLAFSSWL…PWAFSPWMVM (135 aa). Cys-67 is an active-site residue. Cys-67 contributes to the Mg(2+) binding site. A Mn(2+)-binding site is contributed by His-69. Glu-87 lines the Mg(2+) pocket. The Mn(2+) site is built by Glu-114 and Glu-116. The active site involves Glu-116.

This sequence belongs to the IPP isomerase type 1 family. In terms of assembly, homodimer. The cofactor is Mg(2+). It depends on Mn(2+) as a cofactor.

It is found in the cytoplasm. It carries out the reaction isopentenyl diphosphate = dimethylallyl diphosphate. The protein operates within isoprenoid biosynthesis; dimethylallyl diphosphate biosynthesis; dimethylallyl diphosphate from isopentenyl diphosphate: step 1/1. Its function is as follows. Catalyzes the 1,3-allylic rearrangement of the homoallylic substrate isopentenyl (IPP) to its highly electrophilic allylic isomer, dimethylallyl diphosphate (DMAPP). The chain is Isopentenyl-diphosphate Delta-isomerase from Shigella boydii serotype 4 (strain Sb227).